The sequence spans 169 residues: Lipoprotein signal peptidase (169 aa).

4 consecutive transmembrane segments (helical) span residues 4–24, 29–49, 70–90, and 101–121; these read PICSTGLRWLWLAVVVVILDI, WVMAHFALYESVPLIPFFNLT, WFFAGIAIGISVVLMVMMYRS, and YALIIGGALGNLYDRLVHGAV. Active-site residues include Asp123 and Asp141. A helical membrane pass occupies residues 137 to 157; sequence FNLADVAICIGAALVIFEGFL.

It belongs to the peptidase A8 family.

The protein localises to the cell inner membrane. It carries out the reaction Release of signal peptides from bacterial membrane prolipoproteins. Hydrolyzes -Xaa-Yaa-Zaa-|-(S,diacylglyceryl)Cys-, in which Xaa is hydrophobic (preferably Leu), and Yaa (Ala or Ser) and Zaa (Gly or Ala) have small, neutral side chains.. It functions in the pathway protein modification; lipoprotein biosynthesis (signal peptide cleavage). Functionally, this protein specifically catalyzes the removal of signal peptides from prolipoproteins. This Yersinia pestis bv. Antiqua (strain Antiqua) protein is Lipoprotein signal peptidase.